The following is a 99-amino-acid chain: U1-theraphotoxin-Lsp1b (99 aa).

The N-terminal stretch at 1-23 (MRSLTLAALLLCSLLLVFHTSAA) is a signal peptide. The propeptide occupies 24–50 (EELQAQEGHLMIPGDTDTALETVDDER). 4 disulfide bridges follow: C54–C67, C58–C91, C72–C74, and C85–C96.

It belongs to the neurotoxin 12 (Hwtx-2) family. 04 (lasiotoxin) subfamily. Expressed by the venom gland.

It localises to the secreted. Functionally, toxin that causes irreversible contractile paralysis into adult Aedes aegypti resulting in 100% mortality after 24 hours. In Lasiodora sp. (strain IBSP 8539) (Brazilian salmon pink birdeater), this protein is U1-theraphotoxin-Lsp1b.